We begin with the raw amino-acid sequence, 1335 residues long: Protein SPATA31F1 (1335 aa).

A helical transmembrane segment spans residues 8–28 (LWEVGYPLYIYGSIFIVIVII). Disordered stretches follow at residues 403-424 (ALKA…SGSD), 480-502 (LPKT…MSPS), 972-1002 (VQQN…SGDM), 1019-1141 (PSLE…LQDS), and 1248-1335 (ENVA…GHPT). Polar residues predominate over residues 414–424 (SGGQDNDSGSD). Positions 972-1000 (VQQNQKQSNSKAVPQGSAHSVSKISQPSG) are enriched in polar residues. Basic and acidic residues-rich tracts occupy residues 1047–1064 (NRED…REGD), 1071–1083 (STRE…EDQR), and 1129–1139 (PGEKESEKDLQ).

Belongs to the SPATA31 family.

It is found in the membrane. In Homo sapiens (Human), this protein is Protein SPATA31F1.